A 145-amino-acid polypeptide reads, in one-letter code: D-aminoacyl-tRNA deacylase (145 aa).

The Gly-cisPro motif, important for rejection of L-amino acids motif lies at 137-138; the sequence is GP.

It belongs to the DTD family. As to quaternary structure, homodimer.

The protein resides in the cytoplasm. The enzyme catalyses glycyl-tRNA(Ala) + H2O = tRNA(Ala) + glycine + H(+). The catalysed reaction is a D-aminoacyl-tRNA + H2O = a tRNA + a D-alpha-amino acid + H(+). Functionally, an aminoacyl-tRNA editing enzyme that deacylates mischarged D-aminoacyl-tRNAs. Also deacylates mischarged glycyl-tRNA(Ala), protecting cells against glycine mischarging by AlaRS. Acts via tRNA-based rather than protein-based catalysis; rejects L-amino acids rather than detecting D-amino acids in the active site. By recycling D-aminoacyl-tRNA to D-amino acids and free tRNA molecules, this enzyme counteracts the toxicity associated with the formation of D-aminoacyl-tRNA entities in vivo and helps enforce protein L-homochirality. This chain is D-aminoacyl-tRNA deacylase, found in Dinoroseobacter shibae (strain DSM 16493 / NCIMB 14021 / DFL 12).